Consider the following 197-residue polypeptide: Holliday junction branch migration complex subunit RuvA (197 aa).

The segment at 1–64 is domain I; that stretch reads MYEYIKGKYI…EDFIGVYGFL (64 aa). Residues 65–144 are domain II; it reads TKDELSMFKL…DILEEDDEQI (80 aa). Positions 145–149 are flexible linker; that stretch reads INKVT. The domain III stretch occupies residues 149–197; that stretch reads TDDKKVLEAVAALVTLGYSEKEANKVINSCDKNNSLEQIIKEALKYLMK.

Belongs to the RuvA family. In terms of assembly, homotetramer. Forms an RuvA(8)-RuvB(12)-Holliday junction (HJ) complex. HJ DNA is sandwiched between 2 RuvA tetramers; dsDNA enters through RuvA and exits via RuvB. An RuvB hexamer assembles on each DNA strand where it exits the tetramer. Each RuvB hexamer is contacted by two RuvA subunits (via domain III) on 2 adjacent RuvB subunits; this complex drives branch migration. In the full resolvosome a probable DNA-RuvA(4)-RuvB(12)-RuvC(2) complex forms which resolves the HJ.

The protein localises to the cytoplasm. Its function is as follows. The RuvA-RuvB-RuvC complex processes Holliday junction (HJ) DNA during genetic recombination and DNA repair, while the RuvA-RuvB complex plays an important role in the rescue of blocked DNA replication forks via replication fork reversal (RFR). RuvA specifically binds to HJ cruciform DNA, conferring on it an open structure. The RuvB hexamer acts as an ATP-dependent pump, pulling dsDNA into and through the RuvAB complex. HJ branch migration allows RuvC to scan DNA until it finds its consensus sequence, where it cleaves and resolves the cruciform DNA. This chain is Holliday junction branch migration complex subunit RuvA, found in Clostridium botulinum (strain Kyoto / Type A2).